We begin with the raw amino-acid sequence, 328 residues long: BURP domain-containing protein 11 (328 aa).

In terms of domain architecture, BURP spans 74–318 (FFFRDALRPG…TKLSIVWVPR (245 aa)).

In terms of tissue distribution, expressed in roots.

The polypeptide is BURP domain-containing protein 11 (BURP11) (Oryza sativa subsp. japonica (Rice)).